A 190-amino-acid chain; its full sequence is QTIGPGTGYSNGYYYSYWNDGHAGVTYTNGGGGSFTVNWSNSGNFVAGKGWQPGTKNKVINFSGSYNPNGNSYLSIYGWSRNPLIEYYIVENFGTYNPSTGATKLGEVTSDGSVYDIYRTQRVNQPSIIGTATFYQYWSVRRNHRSSGSVNTANHFNAWASHGLTLGTMDYQIVAVEGYFSSGSASITVS.

Residues 1–190 enclose the GH11 domain; that stretch reads QTIGPGTGYS…SSGSASITVS (190 aa). The active-site Nucleophile is the E86. E177 functions as the Proton donor in the catalytic mechanism.

This sequence belongs to the glycosyl hydrolase 11 (cellulase G) family.

The catalysed reaction is Endohydrolysis of (1-&gt;4)-beta-D-xylosidic linkages in xylans.. Its pathway is glycan degradation; xylan degradation. The protein is Endo-1,4-beta-xylanase of Trichoderma harzianum (Hypocrea lixii).